Reading from the N-terminus, the 432-residue chain is 5-methylthioadenosine/S-adenosylhomocysteine deaminase (432 aa).

His62 and His64 together coordinate Zn(2+). Substrate-binding residues include Glu91 and His184. Position 211 (His211) interacts with Zn(2+). Substrate-binding residues include Glu214 and Asp299. Asp299 contacts Zn(2+).

The protein belongs to the metallo-dependent hydrolases superfamily. MTA/SAH deaminase family. The cofactor is Zn(2+).

The enzyme catalyses S-adenosyl-L-homocysteine + H2O + H(+) = S-inosyl-L-homocysteine + NH4(+). The catalysed reaction is S-methyl-5'-thioadenosine + H2O + H(+) = S-methyl-5'-thioinosine + NH4(+). Catalyzes the deamination of 5-methylthioadenosine and S-adenosyl-L-homocysteine into 5-methylthioinosine and S-inosyl-L-homocysteine, respectively. Is also able to deaminate adenosine. This Haloarcula marismortui (strain ATCC 43049 / DSM 3752 / JCM 8966 / VKM B-1809) (Halobacterium marismortui) protein is 5-methylthioadenosine/S-adenosylhomocysteine deaminase.